A 136-amino-acid polypeptide reads, in one-letter code: Small ribosomal subunit protein uS8c (136 aa).

It belongs to the universal ribosomal protein uS8 family. In terms of assembly, part of the 30S ribosomal subunit.

Its subcellular location is the plastid. It localises to the chloroplast. One of the primary rRNA binding proteins, it binds directly to 16S rRNA central domain where it helps coordinate assembly of the platform of the 30S subunit. The chain is Small ribosomal subunit protein uS8c (rps8) from Hordeum vulgare (Barley).